A 249-amino-acid chain; its full sequence is ATP synthase subunit a (249 aa).

Helical transmembrane passes span 30 to 50 (QSPV…YVGM), 86 to 106 (FFPF…LGLL), 115 to 135 (HIAV…IVSL), 142 to 162 (FFAH…LVPI), 191 to 211 (MFAA…VLAV), and 218 to 238 (VALM…FAIL).

This sequence belongs to the ATPase A chain family. As to quaternary structure, F-type ATPases have 2 components, CF(1) - the catalytic core - and CF(0) - the membrane proton channel. CF(1) has five subunits: alpha(3), beta(3), gamma(1), delta(1), epsilon(1). CF(0) has three main subunits: a(1), b(2) and c(9-12). The alpha and beta chains form an alternating ring which encloses part of the gamma chain. CF(1) is attached to CF(0) by a central stalk formed by the gamma and epsilon chains, while a peripheral stalk is formed by the delta and b chains.

The protein resides in the cell inner membrane. Its function is as follows. Key component of the proton channel; it plays a direct role in the translocation of protons across the membrane. This Gluconacetobacter diazotrophicus (strain ATCC 49037 / DSM 5601 / CCUG 37298 / CIP 103539 / LMG 7603 / PAl5) protein is ATP synthase subunit a.